The following is a 518-amino-acid chain: Probable pectinesterase/pectinesterase inhibitor 16 (518 aa).

An N-terminal signal peptide occupies residues 1-33 (MASSSSISNHKIPNTLMFLVIVNFLYLIQTNSA). The tract at residues 30–172 (TNSAVSISSN…TGLLTSSLDL (143 aa)) is pectinesterase inhibitor 16. Asn-82 and Asn-161 each carry an N-linked (GlcNAc...) asparagine glycan. The pectinesterase 16 stretch occupies residues 213–502 (DAVVAPDGSG…FTVASFIDGN (290 aa)). 2 residues coordinate substrate: Thr-289 and Gln-319. The active-site Proton donor; for pectinesterase activity is Asp-342. The Nucleophile; for pectinesterase activity role is filled by Asp-363. Substrate contacts are provided by Arg-422 and Trp-424.

This sequence in the N-terminal section; belongs to the PMEI family. It in the C-terminal section; belongs to the pectinesterase family. In terms of tissue distribution, expressed in siliques and floral stems.

The protein localises to the secreted. It localises to the cell wall. The enzyme catalyses [(1-&gt;4)-alpha-D-galacturonosyl methyl ester](n) + n H2O = [(1-&gt;4)-alpha-D-galacturonosyl](n) + n methanol + n H(+). The protein operates within glycan metabolism; pectin degradation; 2-dehydro-3-deoxy-D-gluconate from pectin: step 1/5. Its function is as follows. Acts in the modification of cell walls via demethylesterification of cell wall pectin. This Arabidopsis thaliana (Mouse-ear cress) protein is Probable pectinesterase/pectinesterase inhibitor 16 (PME16).